A 457-amino-acid polypeptide reads, in one-letter code: Multidrug resistance protein MdtK (457 aa).

The next 12 helical transmembrane spans lie at 11–31 (LLALAIPVVIAQLSQTAMGVV), 46–66 (AVAVGTSIWLPAILFGHGLLL), 93–113 (WLALCVSVLIMLVLYNSDHVI), 127–147 (AVGFLHAIMWGVPGYLFFQVL), 160–180 (GMVIGFVGLLVNIPINYIFIY), 188–208 (LGGVGCGVATASVYWVMFLMM), 243–263 (LPVALALFFEVTLFAVVALLV), 283–301 (LMFMLPMSLSVAATIRVGF), 316–336 (YTSMAVGLLLASVTAVFTIVF), 357–377 (LMLLAALYQLSDAVQVIGSGV), 387–407 (IFFITFTAYWLLGLPSGYLLG), and 418–438 (PAGFWIGFIIGLTAAAILMVL).

The protein belongs to the multi antimicrobial extrusion (MATE) (TC 2.A.66.1) family. MdtK subfamily.

It localises to the cell inner membrane. Functionally, multidrug efflux pump that functions probably as a Na(+)/drug antiporter. This Yersinia pseudotuberculosis serotype O:1b (strain IP 31758) protein is Multidrug resistance protein MdtK.